The sequence spans 956 residues: MDKEKIVIQGARAHNLKNIDVEIPRDKLVVMTGLSGSGKSSLAFDTIYAEGQRRYVESLSAYARQFLGQMDKPDVDLIEGLSPAISIDQKTTSRNPRSTVGTVTEIHDYLRLLYARVGHPVCPNHGIEITSQTIEQMVDRVLEYPEKTRIQIMAPIVSGKKGTHKKTIEEIKKEGYVRIRVDGEIYDINDEIEIEKNKKHSIEIIIDRIVIKEGINTRLYDSIEAALRLADGYAVVDIMGDKELLFSEHYACPYCGFSVGELEPRMFSFNSPFGACPTCDGLGTKLEVDVDTVIPDRSMSLNEGAIIPWRPISSQYYPQMLASACKEFGIDMDTPLEKLSKEELDIILNGSKDKEFYFEYKNDFGMTRETWIPFEGILPNIERRYRETNSDFTRDQMAQYMTDLPCPSCKGYRLKEETLSVKVNDHHIGQISEFSINEALAFFDGLELSEKETQIAAPIFKEVRARLGFLKNVGLDYLTMSRAAGTLSGGEAQRIRLATQIGSRLTGVLYILDEPSIGLHQRDNDRLISTLQSMRDIGNTLIVVEHDEDTMMAADYLIDIGPGAGEHGGRIVAAGTPEEVANNKNSITGDYLSGKKFIPVPAKRRKGNGLELEIIGAKANNLKNVNAKIPLATFSCVTGVSGSGKSSLVNEVLRKALARKLNRNHAKPGEHKEIKGIENLEKIINIDQSPIGRTPRSNPATYTGAFDDIRDLFASTNEAKVRGYKKGRFSFNVKGGRCEACKGDGIIKIEMHFLPDVYVPCEVCHGKRYNGETLDIRYKGKNIAEVLEMTVEEGLEYFTNQPRIARKLQTIVDVGLGYIRLGQPATTLSGGEAQRVKLASELHKRSNGKSFYILDEPTTGLHADDIGRLLKVLQRLVEENGDTVLVIEHNLDVIKQADYLIDLGPEGGDGGGQIIATGTPEKIARSKKSYTGKYLKPILERDKERTEERIATAKKK.

33–40 (GLSGSGKS) provides a ligand contact to ATP. The segment at 252-279 (CPYCGFSVGELEPRMFSFNSPFGACPTC) adopts a C4-type zinc-finger fold. ABC transporter domains lie at 309–587 (WRPI…KNSI) and 607–936 (GNGL…KYLK). 639–646 (GVSGSGKS) is an ATP binding site. The C4-type zinc finger occupies 738–764 (CEACKGDGIIKIEMHFLPDVYVPCEVC).

This sequence belongs to the ABC transporter superfamily. UvrA family. In terms of assembly, forms a heterotetramer with UvrB during the search for lesions.

It is found in the cytoplasm. Its function is as follows. The UvrABC repair system catalyzes the recognition and processing of DNA lesions. UvrA is an ATPase and a DNA-binding protein. A damage recognition complex composed of 2 UvrA and 2 UvrB subunits scans DNA for abnormalities. When the presence of a lesion has been verified by UvrB, the UvrA molecules dissociate. In Listeria monocytogenes serovar 1/2a (strain ATCC BAA-679 / EGD-e), this protein is UvrABC system protein A.